The chain runs to 665 residues: Fermitin family homolog 3 (665 aa).

The residue at position 11 (Y11) is a Phosphotyrosine. The FERM domain maps to 229-556 (WLDSSRCLMQ…SLPDFGISYV (328 aa)). The PH domain occupies 354 to 453 (DHLRIFRPRK…WMAGCRLASK (100 aa)). Y502 is subject to Phosphotyrosine. T589 carries the phosphothreonine modification.

It belongs to the kindlin family. In terms of assembly, interacts with ITGB1, ITGB2 and ITGB3 (via cytoplasmic tails).

The protein localises to the cell projection. It is found in the podosome. Its function is as follows. Plays a central role in cell adhesion in hematopoietic cells. Acts by activating the integrin beta-1-3 (ITGB1, ITGB2 and ITGB3). Required for integrin-mediated platelet adhesion and leukocyte adhesion to endothelial cells. Required for activation of integrin beta-2 (ITGB2) in polymorphonuclear granulocytes (PMNs). The sequence is that of Fermitin family homolog 3 (FERMT3) from Bos taurus (Bovine).